We begin with the raw amino-acid sequence, 90 residues long: MKKKGGRKIFGFMVKEEKEENRGSVEFQVFSFTNKIRRLASHLELHKKDFSSERGLRRLLGKRRRLLAYLAKKNRVRYKKLIGQLNIREQ.

The protein belongs to the universal ribosomal protein uS15 family. Part of the 30S ribosomal subunit.

It is found in the plastid. The protein localises to the chloroplast. This chain is Small ribosomal subunit protein uS15c (rps15), found in Secale cereale (Rye).